Consider the following 548-residue polypeptide: Lysine--tRNA ligase (548 aa).

Positions 52-60 (PSGLPHIGT) match the 'HIGH' region motif. The short motif at 300 to 304 (KISKS) is the 'KMSKS' region element. Lys-303 serves as a coordination point for ATP.

This sequence belongs to the class-I aminoacyl-tRNA synthetase family.

The protein localises to the cytoplasm. It carries out the reaction tRNA(Lys) + L-lysine + ATP = L-lysyl-tRNA(Lys) + AMP + diphosphate. The polypeptide is Lysine--tRNA ligase (Mesorhizobium japonicum (strain LMG 29417 / CECT 9101 / MAFF 303099) (Mesorhizobium loti (strain MAFF 303099))).